The sequence spans 353 residues: Photosystem II D2 protein (353 aa).

Position 2 is an N-acetylthreonine (threonine 2). Position 2 is a phosphothreonine (threonine 2). Residues 41–61 (CAYFALGGWFTGTTFVTSWYT) traverse the membrane as a helical segment. Histidine 118 is a binding site for chlorophyll a. Residues 125 to 141 (GFMLRQFELARSVQLRP) form a helical membrane-spanning segment. Pheophytin a contacts are provided by glutamine 130 and asparagine 143. Residues 153 to 166 (VFVSVFFIYPLGQS) traverse the membrane as a helical segment. Histidine 198 lines the chlorophyll a pocket. Residues 208–228 (AALLCAIHGATVENTLFEDGD) form a helical membrane-spanning segment. 2 residues coordinate a plastoquinone: histidine 215 and phenylalanine 262. Histidine 215 is a binding site for Fe cation. Histidine 269 contacts Fe cation. Residues 279–295 (GLWMSALGVVGLALNLR) traverse the membrane as a helical segment.

This sequence belongs to the reaction center PufL/M/PsbA/D family. PSII is composed of 1 copy each of membrane proteins PsbA, PsbB, PsbC, PsbD, PsbE, PsbF, PsbH, PsbI, PsbJ, PsbK, PsbL, PsbM, PsbT, PsbX, PsbY, PsbZ, Psb30/Ycf12, at least 3 peripheral proteins of the oxygen-evolving complex and a large number of cofactors. It forms dimeric complexes. The D1/D2 heterodimer binds P680, chlorophylls that are the primary electron donor of PSII, and subsequent electron acceptors. It shares a non-heme iron and each subunit binds pheophytin, quinone, additional chlorophylls, carotenoids and lipids. There is also a Cl(-1) ion associated with D1 and D2, which is required for oxygen evolution. The PSII complex binds additional chlorophylls, carotenoids and specific lipids. serves as cofactor.

It is found in the plastid membrane. The enzyme catalyses 2 a plastoquinone + 4 hnu + 2 H2O = 2 a plastoquinol + O2. In terms of biological role, photosystem II (PSII) is a light-driven water:plastoquinone oxidoreductase that uses light energy to abstract electrons from H(2)O, generating O(2) and a proton gradient subsequently used for ATP formation. It consists of a core antenna complex that captures photons, and an electron transfer chain that converts photonic excitation into a charge separation. The D1/D2 (PsbA/PsbD) reaction center heterodimer binds P680, the primary electron donor of PSII as well as several subsequent electron acceptors. D2 is needed for assembly of a stable PSII complex. The chain is Photosystem II D2 protein from Cuscuta exaltata (Tall dodder).